Reading from the N-terminus, the 113-residue chain is Carboxysome shell protein CcmK1 (113 aa).

In terms of domain architecture, BMC spans 4–90 (AVGMIETLGF…PHENLEYVLP (87 aa)).

It belongs to the bacterial microcompartments protein family. CcmK subfamily. Homohexamer. Interacts preferentially with CcmK2 and CcmK4a rather than itself in vitro.

The protein resides in the carboxysome. Its function is as follows. One of the shell proteins of the carboxysome, a polyhedral inclusion where RuBisCO (ribulose bisphosphate carboxylase, rbcL-rbcS) is sequestered. Assembles into hexamers which make sheets that form the facets of the polyhedral carboxysome. The hexamer central pore probably regulates metabolite flux. The sequence is that of Carboxysome shell protein CcmK1 from Thermosynechococcus vestitus (strain NIES-2133 / IAM M-273 / BP-1).